The following is a 284-amino-acid chain: Homoserine O-acetyltransferase 2 (284 aa).

The active-site Acyl-thioester intermediate is Cys133. Substrate is bound by residues Lys154 and Ser178. His220 functions as the Proton acceptor in the catalytic mechanism. The active site involves Glu222. Position 234 (Arg234) interacts with substrate.

It belongs to the MetA family.

It is found in the cytoplasm. The enzyme catalyses L-homoserine + acetyl-CoA = O-acetyl-L-homoserine + CoA. It functions in the pathway amino-acid biosynthesis; L-methionine biosynthesis via de novo pathway; O-acetyl-L-homoserine from L-homoserine: step 1/1. Its function is as follows. Transfers an acetyl group from acetyl-CoA to L-homoserine, forming acetyl-L-homoserine. This is Homoserine O-acetyltransferase 2 from Ilyobacter polytropus (strain ATCC 51220 / DSM 2926 / LMG 16218 / CuHBu1).